Consider the following 281-residue polypeptide: Ermin (281 aa).

Composition is skewed to polar residues over residues 1–12 (MTDTPETLSGTE), 21–31 (NGQQPSSQTRQ), and 135–147 (AQQQLEQRGDAST). 3 disordered regions span residues 1-80 (MTDT…KILN), 110-147 (REGHPWKKIPPNSSNLEVSRQKERTAQQQLEQRGDAST), and 167-248 (KCDE…GDIA). Residues 169-197 (DEEEEEEEEVWNEEINEEDVDECAEEEDE) are compositionally biased toward acidic residues. Basic and acidic residues predominate over residues 198–223 (VRVIEFKRKHREGSPLKEESLAREDS). Phosphoserine is present on residues S211, S223, S227, and S230. T234 is subject to Phosphothreonine. The tract at residues 262 to 281 (KIRKGNTKQRIDEFESMMHL) is binds actin.

In terms of assembly, binds actin. As to expression, brain and spinal cord. Exclusively expressed by the oligodendrocytes. Appears at a late stage during myelination, and in the mature nerves, it is localized to the outer cytoplasmic lip of the myelin sheath and the paranodal loops.

It is found in the cytoplasm. The protein localises to the cytoskeleton. Plays a role in cytoskeletal rearrangements during the late wrapping and/or compaction phases of myelinogenesis as well as in maintenance and stability of myelin sheath in the adult. May play an important role in late-stage oligodendroglia maturation, myelin/Ranvier node formation during CNS development, and in the maintenance and plasticity of related structures in the mature CNS. The chain is Ermin (Ermn) from Mus musculus (Mouse).